The sequence spans 730 residues: Dual function macrocyclase-peptidase POPB (730 aa).

Residues methionine 1 to proline 34 form a disordered region. Catalysis depends on charge relay system residues serine 577, aspartate 661, and histidine 698.

Belongs to the peptidase S9A family. As to quaternary structure, monomer.

It carries out the reaction Hydrolysis of Pro-|-Xaa &gt;&gt; Ala-|-Xaa in oligopeptides.. Its function is as follows. Dual function macrocyclase-peptidase involved in the biosynthesis of the highly toxic amanitin toxin family of macrocycles. Cleaves peptide bonds on the C-terminal side of prolyl residues. The enzyme first removes 10 residues from the N-terminus of a 35-residue substrate. Conformational trapping of the 25 amino-acid peptide forces the enzyme to release this intermediate rather than proceed to macrocyclization. The enzyme rebinds the 25 amino-acid peptide in a different conformation and catalyzes macrocyclization of the N-terminal eight residues. The polypeptide is Dual function macrocyclase-peptidase POPB (Galerina marginata (strain CBS 339.88)).